We begin with the raw amino-acid sequence, 342 residues long: Isopentenyl-diphosphate delta-isomerase (342 aa).

11-12 contacts substrate; that stretch reads RK. FMN is bound by residues S68, 69-71, S99, and N128; that span reads SMT. 99–101 contacts substrate; sequence SQR. Q162 serves as a coordination point for substrate. Residue E163 coordinates Mg(2+). Residues K194, S219, T224, 275–277, and 296–297 contribute to the FMN site; these read GVR and AK.

This sequence belongs to the IPP isomerase type 2 family. As to quaternary structure, homooctamer. Dimer of tetramers. FMN serves as cofactor. NADPH is required as a cofactor. The cofactor is Mg(2+).

It localises to the cytoplasm. The catalysed reaction is isopentenyl diphosphate = dimethylallyl diphosphate. Its function is as follows. Involved in the biosynthesis of isoprenoids. Catalyzes the 1,3-allylic rearrangement of the homoallylic substrate isopentenyl (IPP) to its allylic isomer, dimethylallyl diphosphate (DMAPP). The protein is Isopentenyl-diphosphate delta-isomerase of Legionella pneumophila (strain Paris).